We begin with the raw amino-acid sequence, 735 residues long: MTPELMIKACSFYTGHLVKTHFCTWRDIARTNENVVLAEKMNRAVTCYNFRLQKSVFHHWHSYMEDQKEKLKNILLRIQQIIYCHKLTIILTKWRNTARHKSKKKEDELILKHELQLKKWKNRLILKRAAAEESNFPERSSSEVFLVDETLKCDISLLPERAILQIFFYLSLKDVIICGQVNHAWMLMTQLNSLWNAIDFSSVKNVIPDKYIVSTLQRWRLNVLRLNFRGCLLRPKTFRSVSHCRNLQELNVSDCPTFTDESMRHISEGCPGVLCLNLSNTTITNRTMRLLPRHFHNLQNLSLAYCRRFTDKGLQYLNLGNGCHKLIYLDLSGCTQISVQGFRYIANSCTGIMHLTINDMPTLTDNCVKALVEKCSRITSLVFTGAPHISDCTFRALSACKLRKIRFEGNKRVTDASFKFIDKNYPNLSHIYMADCKGITDSSLRSLSPLKQLTVLNLANCVRIGDMGLKQFLDGPASMRIRELNLSNCVRLSDASVMKLSERCPNLNYLSLRNCEHLTAQGIGYIVNIFSLVSIDLSGTDISNEGLNVLSRHKKLKELSVSECYRITDDGIQAFCKSSLILEHLDVSYCSQLSDMIIKALAIYCINLTSLSIAGCPKITDSAMEMLSAKCHYLHILDISGCVLLTDQILEDLQIGCKQLRILKMQYCTNISKKAAQRMSSKVQQQEYNTNDPPRWFGYDREGNPVTELDNITSSKGALELTVKKSTYSSEDQAA.

One can recognise an F-box domain in the interval 152–198 (KCDISLLPERAILQIFFYLSLKDVIICGQVNHAWMLMTQLNSLWNAI). LRR repeat units follow at residues 230–254 (GCLLRPKTFRSVSHCRNLQELNVSD), 255–280 (CPTFTDESMRHISEGCPGVLCLNLSN), 281–305 (TTITNRTMRLLPRHFHNLQNLSLAY), 306–333 (CRRFTDKGLQYLNLGNGCHKLIYLDLSG), 334–359 (CTQISVQGFRYIANSCTGIMHLTIND), 360–385 (MPTLTDNCVKALVEKCSRITSLVFTG), 386–406 (APHISDCTFRALSACKLRKIR), 410–435 (NKRVTDASFKFIDKNYPNLSHIYMAD), 436–460 (CKGITDSSLRSLSPLKQLTVLNLAN), 461–488 (CVRIGDMGLKQFLDGPASMRIRELNLSN), 489–514 (CVRLSDASVMKLSERCPNLNYLSLRN), 515–538 (CEHLTAQGIGYIVNIFSLVSIDLS), 539–563 (GTDISNEGLNVLSRHKKLKELSVSE), 564–589 (CYRITDDGIQAFCKSSLILEHLDVSY), 590–615 (CSQLSDMIIKALAIYCINLTSLSIAG), 616–641 (CPKITDSAMEMLSAKCHYLHILDISG), and 642–667 (CVLLTDQILEDLQIGCKQLRILKMQY). Residues 682-692 (KVQQQEYNTND) are compositionally biased toward polar residues. The disordered stretch occupies residues 682–703 (KVQQQEYNTNDPPRWFGYDREG).

The protein belongs to the DRC6 family. In terms of assembly, component of the nexin-dynein regulatory complex (N-DRC). Directly interacts with SKP1 and CUL1. Interacts with TCTE1/DRC5.

The protein resides in the cytoplasm. It localises to the cytoskeleton. It is found in the flagellum axoneme. The protein localises to the microtubule organizing center. Its subcellular location is the centrosome. In terms of biological role, substrate-recognition component of the SCF (SKP1-CUL1-F-box protein)-type E3 ubiquitin ligase complex. Component of the nexin-dynein regulatory complex (N-DRC), a key regulator of ciliary/flagellar motility which maintains the alignment and integrity of the distal axoneme and regulates microtubule sliding in motile axonemes. Specifically targets CEP192 isoform 3 for ubiquitin-mediated proteolysis and thereby acts as a regulator of microtubule nucleation activity. The protein is F-box and leucine-rich repeat protein 13 (FBXL13) of Homo sapiens (Human).